Consider the following 388-residue polypeptide: Adenosine deaminase-like protein (388 aa).

The span at 1 to 13 (MPNNSKHKKKQQR) shows a compositional bias: basic residues. The segment at 1–34 (MPNNSKHKKKQQRRQQEAQKKSRAKQIETDKKND) is disordered. The span at 14–34 (RQQEAQKKSRAKQIETDKKND) shows a compositional bias: basic and acidic residues. 2 residues coordinate Zn(2+): His-65 and His-67. Residues His-67, His-114, 146 to 149 (TSPK), Asp-186, and Gly-218 each bind N(6)-methyl-AMP. His-245 provides a ligand contact to Zn(2+). N(6)-methyl-AMP-binding residues include Glu-248, Asp-326, and Asp-327. Catalysis depends on Glu-248, which acts as the Proton donor. Zn(2+) is bound at residue Asp-326.

It belongs to the metallo-dependent hydrolases superfamily. Adenosine and AMP deaminases family. In terms of assembly, monomer. The cofactor is Zn(2+).

The enzyme catalyses N(6)-methyl-AMP + H2O + H(+) = IMP + methylamine. Catalyzes the hydrolysis of the free cytosolic methylated adenosine nucleotide N(6)-methyl-AMP (N6-mAMP) to produce inositol monophosphate (IMP) and methylamine. Is required for the catabolism of cytosolic N6-mAMP, which is derived from the degradation of mRNA containing N6-methylated adenine (m6A). This is Adenosine deaminase-like protein from Caenorhabditis elegans.